The following is a 27-amino-acid chain: L-amino-acid oxidase (27 aa).

As to quaternary structure, homodimer; non-covalently linked. FAD is required as a cofactor. Post-translationally, contains 2 disulfide bonds. N-glycosylated. In terms of tissue distribution, expressed by the venom gland.

The protein resides in the secreted. It catalyses the reaction an L-alpha-amino acid + O2 + H2O = a 2-oxocarboxylate + H2O2 + NH4(+). It carries out the reaction L-leucine + O2 + H2O = 4-methyl-2-oxopentanoate + H2O2 + NH4(+). Its function is as follows. Catalyzes an oxidative deamination of predominantly hydrophobic and aromatic L-amino acids, thus producing hydrogen peroxide that may contribute to the diverse toxic effects of this enzyme. Shows activity on L-Leu. Exhibits diverse biological activities, such as hemolysis, edema, apoptosis, as well as induction of platelet aggregation. Effects of snake L-amino oxidases on platelets are controversial, since they either induce aggregation or inhibit agonist-induced aggregation. These different effects are probably due to different experimental conditions. Unlike other snake venom L-amino acid oxidases, does not induce hemorrhage. This protein may also have antibacterial and antiparasitic activities. The chain is L-amino-acid oxidase from Eristicophis macmahoni (Leaf-nosed viper).